The chain runs to 745 residues: Translation initiation factor IF-2 (745 aa).

Residues 1-154 form a disordered region; the sequence is MSDKPRRDTG…PAARPVVRPR (154 aa). Polar residues predominate over residues 36–56; sequence TGRSPNASTGGNRSAGNQAGN. Residues 68–98 are compositionally biased toward low complexity; the sequence is ATTPAPNRNTPPAGARQGGAANARTGTPPVA. Residues 99–113 show a composition bias toward gly residues; sequence RGGGGGVTPPTGRGG. Residues 114–126 are compositionally biased toward low complexity; sequence NNPRAARNQPRSR. Basic and acidic residues predominate over residues 127 to 138; that stretch reads QQPEEREREHVL. Positions 241–410 constitute a tr-type G domain; sequence PRPPVVTIMG…LLVADLEDLR (170 aa). The G1 stretch occupies residues 250–257; sequence GHVDHGKT. A GTP-binding site is contributed by 250-257; that stretch reads GHVDHGKT. The interval 275–279 is G2; it reads GITQH. Residues 296–299 form a G3 region; the sequence is DTPG. GTP is bound by residues 296–300 and 350–353; these read DTPGH and NKID. The segment at 350–353 is G4; sequence NKID. The interval 386–388 is G5; the sequence is SAR.

This sequence belongs to the TRAFAC class translation factor GTPase superfamily. Classic translation factor GTPase family. IF-2 subfamily.

It is found in the cytoplasm. Its function is as follows. One of the essential components for the initiation of protein synthesis. Protects formylmethionyl-tRNA from spontaneous hydrolysis and promotes its binding to the 30S ribosomal subunits. Also involved in the hydrolysis of GTP during the formation of the 70S ribosomal complex. The sequence is that of Translation initiation factor IF-2 from Chloroflexus aurantiacus (strain ATCC 29366 / DSM 635 / J-10-fl).